Reading from the N-terminus, the 595-residue chain is Wee1-like protein kinase 1-B (595 aa).

Residues Met-1–Val-17 are compositionally biased toward polar residues. Residues Met-1 to Phe-127 are disordered. The span at Pro-111–Pro-122 shows a compositional bias: pro residues. Position 186 is a phosphothreonine; by cdk1 (Thr-186). A Protein kinase domain is found at Phe-248 to Leu-518. ATP-binding positions include Ile-254–Val-262 and Lys-277. Asp-375 acts as the Proton acceptor in catalysis. Residues Asn-380 and Asp-412 each contribute to the Mg(2+) site. Residues Ala-526–Phe-563 adopt a coiled-coil conformation.

Belongs to the protein kinase superfamily. Ser/Thr protein kinase family. WEE1 subfamily. As to quaternary structure, interacts (when phosphorylated at Thr-186) with pin1. In terms of processing, phosphorylation at Thr-186 during M-phase by cdk1 inhibits the kinase activity and leads to interaction with pin1. As to expression, zygotically expressed. Present in oocytes and postgastrula embryos (at least until the tailbud stage). Expression begins at the midblastula stage and increases after the early gastrula stage.

The protein localises to the nucleus. It carries out the reaction L-tyrosyl-[protein] + ATP = O-phospho-L-tyrosyl-[protein] + ADP + H(+). Acts as a zygotic negative regulator of entry into mitosis (G2 to M transition) by protecting the nucleus from cytoplasmically activated cyclin B1-complexed cdk1 before the onset of mitosis by mediating phosphorylation of cdk1 on 'Tyr-15'. Specifically phosphorylates and inactivates cyclin B1-complexed cdk1 reaching a maximum during G2 phase and a minimum as cells enter M phase. Phosphorylation of cyclin B1-cdk1 occurs exclusively on 'Tyr-15' and phosphorylation of monomeric cdk1 does not occur. This chain is Wee1-like protein kinase 1-B (wee1-b), found in Xenopus laevis (African clawed frog).